The primary structure comprises 262 residues: Zinc finger protein ehn-3 (262 aa).

C2H2-type zinc fingers lie at residues 2–24 (EKCD…KVMH), 30–52 (FECQ…MMTH), 59–84 (FECP…DSEH), and 92–115 (AKCK…HTAH). Positions 179 to 204 (SVKSAKELSPTPSTEIETPEEEELDG) are disordered. Residues 185–194 (ELSPTPSTEI) show a composition bias toward low complexity. Positions 195–204 (ETPEEEELDG) are enriched in acidic residues. C2H2-type zinc fingers lie at residues 208 to 230 (WYCD…SGLH) and 236 to 260 (FKCS…YANH).

Belongs to the krueppel C2H2-type zinc-finger protein family.

Its subcellular location is the nucleus. Together with the zinc finger protein ztf-16, plays a role in gonadogenesis, specifically in somatic gonad precursor cell development. This is possibly by regulating tra-1 gene expression. Its function is as follows. Required for proper gonadal primordium assembly and somatic gonad precursor cell morphology. In Caenorhabditis elegans, this protein is Zinc finger protein ehn-3.